The primary structure comprises 386 residues: Zinc finger protein 385A (386 aa).

The Matrin-type 1 zinc-finger motif lies at 74 to 98 (ISCNVCQIRFNSQSQAEAHYKGNRH). Positions 88 to 193 (QAEAHYKGNR…ASLPGGSKEE (106 aa)) are disordered. Residues 103–121 (KGIEAAKTRGREPSVRESG) show a composition bias toward basic and acidic residues. Residues 145 to 351 (NGLGPAPGSP…AGSPLSLRPA (207 aa)) are necessary for binding to ITPR1, CEBPA and p53/TP53 mRNAs. Residue S185 is modified to Phosphoserine. The Matrin-type 2 zinc-finger motif lies at 201-225 (LYCALCKVAVNSLSQLEAHNKGTKH). T248 carries the phosphothreonine modification. The segment at 261 to 285 (FHCEICNVKVNSEVQLKQHISSRRH) adopts a Matrin-type 3 zinc-finger fold. Residues 279 to 305 (HISSRRHRDGVAGKPNPLLSRHKKPRG) form a disordered region.

In terms of assembly, interacts with p53/TP53; the interaction is direct and enhances p53/TP53 transactivation functions on cell-cycle arrest target genes, resulting in growth arrest. Interacts with ELAVL1; the interaction is indirect, mRNA-dependent and may regulate p53/TP53 expression. In terms of processing, ubiquitinated upon prolonged exposure to genotoxic stress, which leads to proteasomal degradation of ZNF385A and releases p53/TP53 from cell-cycle arrest target gene promoters. In terms of tissue distribution, expressed in brain and testis (at protein level). In brain, the expression is located to olfactory bulb, cerebral cortex, hippocampus, satellite cells and Purkinje cells of the cerebellum molecular layer. Detected in bone marrow, white and brown adipose tissue, lung and at lower levels in the thymus.

The protein localises to the cytoplasm. Its subcellular location is the nucleus. It is found in the nucleolus. The protein resides in the cell projection. It localises to the dendrite. In terms of biological role, RNA-binding protein that affects the localization and the translation of a subset of mRNA. May play a role in adipogenesis through binding to the 3'-UTR of CEBPA mRNA and regulation of its translation. Targets ITPR1 mRNA to dendrites in Purkinje cells, and may regulate its activity-dependent translation. With ELAVL1, binds the 3'-UTR of p53/TP53 mRNAs to control their nuclear export induced by CDKN2A. Hence, may regulate p53/TP53 expression and mediate in part the CDKN2A anti-proliferative activity. May also bind CCNB1 mRNA. Alternatively, may also regulate p53/TP53 activity through direct protein-protein interaction. Interacts with p53/TP53 and promotes cell-cycle arrest over apoptosis enhancing preferentially the DNA binding and transactivation of p53/TP53 on cell-cycle arrest target genes over proapoptotic target genes. May also regulate the ubiquitination and stability of CDKN1A promoting DNA damage-induced cell cycle arrest. Also plays a role in megakaryocytes differentiation. The polypeptide is Zinc finger protein 385A (Znf385a) (Mus musculus (Mouse)).